Here is a 436-residue protein sequence, read N- to C-terminus: Envelope glycoprotein (436 aa).

A signal peptide is located at residue Met1. At 2 to 436 (ANPSPHQIYN…GGLTVGGIAA (435 aa)) the chain is on the extracellular side. 2 N-linked (GlcNAc...) asparagine; by host glycosylation sites follow: Asn11 and Asn26. 2 disulfide bridges follow: Cys95-Cys117 and Cys109-Cys122. Residues 203-255 (PPQAMGPNLVLPDQKPPSRQSQTGSKVATQRPQTNESAPRSVGPTTMGPKRIG) are disordered. The span at 219–240 (PSRQSQTGSKVATQRPQTNESA) shows a compositional bias: polar residues. N-linked (GlcNAc...) asparagine; by host glycans are attached at residues Asn237, Asn272, and Asn277. Positions 282–285 (CWLC) match the CXXC motif. 4 N-linked (GlcNAc...) asparagine; by host glycosylation sites follow: Asn304, Asn344, Asn360, and Asn380.

As to quaternary structure, the mature envelope protein (Env) consists of a trimer of SU-TM heterodimers attached by a labile interchain disulfide bond. In terms of processing, specific enzymatic cleavages in vivo yield mature proteins. Envelope glycoproteins are synthesized as an inactive precursor that is N-glycosylated and processed likely by host cell furin or by a furin-like protease in the Golgi to yield the mature SU and TM proteins. The cleavage site between SU and TM requires the minimal sequence [KR]-X-[KR]-R.

It localises to the virion membrane. Its subcellular location is the host cell membrane. Functionally, the surface protein (SU) attaches the virus to the host cell by binding to its receptor. This interaction triggers the refolding of the transmembrane protein (TM) and is thought to activate its fusogenic potential by unmasking its fusion peptide. Fusion occurs at the host cell plasma membrane. Its function is as follows. The transmembrane protein (TM) acts as a class I viral fusion protein. Under the current model, the protein has at least 3 conformational states: pre-fusion native state, pre-hairpin intermediate state, and post-fusion hairpin state. During viral and target cell membrane fusion, the coiled coil regions (heptad repeats) assume a trimer-of-hairpins structure, positioning the fusion peptide in close proximity to the C-terminal region of the ectodomain. The formation of this structure appears to drive apposition and subsequent fusion of viral and target cell membranes. Membranes fusion leads to delivery of the nucleocapsid into the cytoplasm. This is Envelope glycoprotein from Feline leukemia virus (strain C/FS246).